The following is a 99-amino-acid chain: uncharacterized protein (99 aa).

This is an uncharacterized protein from Caenorhabditis elegans.